A 221-amino-acid polypeptide reads, in one-letter code: Translation initiation factor 6 (221 aa).

This sequence belongs to the eIF-6 family.

In terms of biological role, binds to the 50S ribosomal subunit and prevents its association with the 30S ribosomal subunit to form the 70S initiation complex. The polypeptide is Translation initiation factor 6 (Nitrosopumilus maritimus (strain SCM1)).